Here is a 122-residue protein sequence, read N- to C-terminus: Large ribosomal subunit protein uL14 (122 aa).

This sequence belongs to the universal ribosomal protein uL14 family. As to quaternary structure, part of the 50S ribosomal subunit. Forms a cluster with proteins L3 and L19. In the 70S ribosome, L14 and L19 interact and together make contacts with the 16S rRNA in bridges B5 and B8.

Binds to 23S rRNA. Forms part of two intersubunit bridges in the 70S ribosome. This Bacillus licheniformis (strain ATCC 14580 / DSM 13 / JCM 2505 / CCUG 7422 / NBRC 12200 / NCIMB 9375 / NCTC 10341 / NRRL NRS-1264 / Gibson 46) protein is Large ribosomal subunit protein uL14.